A 411-amino-acid chain; its full sequence is Aspartokinase (411 aa).

7–10 contributes to the ATP binding site; sequence KFGG. 25–30 is a binding site for substrate; it reads RVIEEK. Ser41 serves as a coordination point for ATP. Residues 47 to 49, Glu74, 125 to 126, 150 to 153, and Ser153 each bind substrate; these read TDE, LN, and RGGS. Residues 173–174 and 179–184 contribute to the ATP site; these read TD and FTTDPR. ACT domains follow at residues 264-338 and 344-411; these read VTVF…SETG and IVGS…KSER. Residues 289-291, Gln295, 355-356, 369-370, and 376-377 each bind substrate; these read NVD, VA, QV, and SE.

This sequence belongs to the aspartokinase family. As to quaternary structure, tetramer consisting of 2 isoforms Alpha (catalytic and regulation) and of a homodimer of 2 isoforms Beta (regulation).

It catalyses the reaction L-aspartate + ATP = 4-phospho-L-aspartate + ADP. The protein operates within amino-acid biosynthesis; L-lysine biosynthesis via DAP pathway; (S)-tetrahydrodipicolinate from L-aspartate: step 1/4. Its pathway is amino-acid biosynthesis; L-methionine biosynthesis via de novo pathway; L-homoserine from L-aspartate: step 1/3. It functions in the pathway amino-acid biosynthesis; L-threonine biosynthesis; L-threonine from L-aspartate: step 1/5. Lysine-sensitive. Functionally, catalyzes the phosphorylation of the beta-carboxyl group of aspartic acid with ATP to yield 4-phospho-L-aspartate, which is involved in the branched biosynthetic pathway leading to the biosynthesis of amino acids threonine, isoleucine and methionine. The chain is Aspartokinase (lysC) from Bacillus sp. (strain MGA3).